The sequence spans 511 residues: Apolipoprotein N-acyltransferase (511 aa).

Helical transmembrane passes span 7-25, 58-78, 90-110, 125-145, 163-183, and 192-212; these read PGWP…TPLA, GWWY…VSIH, FLML…AWLW, LAFA…LTGF, VPVG…ALLV, and GASL…GLYL. The region spanning 230–470 is the CN hydrolase domain; it reads IQGNIAQELK…QGILRGEVIP (241 aa). The Proton acceptor role is filled by Glu-269. Residue Lys-330 is part of the active site. The active-site Nucleophile is the Cys-382. Residues 478–498 traverse the membrane as a helical segment; the sequence is LQYRVWPLAGLAGVLLLWALL.

This sequence belongs to the CN hydrolase family. Apolipoprotein N-acyltransferase subfamily.

It is found in the cell inner membrane. It catalyses the reaction N-terminal S-1,2-diacyl-sn-glyceryl-L-cysteinyl-[lipoprotein] + a glycerophospholipid = N-acyl-S-1,2-diacyl-sn-glyceryl-L-cysteinyl-[lipoprotein] + a 2-acyl-sn-glycero-3-phospholipid + H(+). It functions in the pathway protein modification; lipoprotein biosynthesis (N-acyl transfer). In terms of biological role, catalyzes the phospholipid dependent N-acylation of the N-terminal cysteine of apolipoprotein, the last step in lipoprotein maturation. This is Apolipoprotein N-acyltransferase from Pseudomonas paraeruginosa (strain DSM 24068 / PA7) (Pseudomonas aeruginosa (strain PA7)).